Here is a 1409-residue protein sequence, read N- to C-terminus: DNA-directed RNA polymerase subunit beta' (1409 aa).

Cysteine 69, cysteine 71, cysteine 84, and cysteine 87 together coordinate Zn(2+). Residues aspartate 461, aspartate 463, and aspartate 465 each contribute to the Mg(2+) site. Zn(2+) is bound by residues cysteine 805, cysteine 879, cysteine 886, and cysteine 889.

The protein belongs to the RNA polymerase beta' chain family. The RNAP catalytic core consists of 2 alpha, 1 beta, 1 beta' and 1 omega subunit. When a sigma factor is associated with the core the holoenzyme is formed, which can initiate transcription. The cofactor is Mg(2+). Zn(2+) serves as cofactor.

It carries out the reaction RNA(n) + a ribonucleoside 5'-triphosphate = RNA(n+1) + diphosphate. Functionally, DNA-dependent RNA polymerase catalyzes the transcription of DNA into RNA using the four ribonucleoside triphosphates as substrates. This chain is DNA-directed RNA polymerase subunit beta', found in Anaplasma phagocytophilum (strain HZ).